Here is a 179-residue protein sequence, read N- to C-terminus: Crossover junction endodeoxyribonuclease RuvC (179 aa).

Active-site residues include Asp14, Glu74, and Asp147. Mg(2+) is bound by residues Asp14, Glu74, and Asp147.

It belongs to the RuvC family. As to quaternary structure, homodimer which binds Holliday junction (HJ) DNA. The HJ becomes 2-fold symmetrical on binding to RuvC with unstacked arms; it has a different conformation from HJ DNA in complex with RuvA. In the full resolvosome a probable DNA-RuvA(4)-RuvB(12)-RuvC(2) complex forms which resolves the HJ. Mg(2+) serves as cofactor.

The protein localises to the cytoplasm. It catalyses the reaction Endonucleolytic cleavage at a junction such as a reciprocal single-stranded crossover between two homologous DNA duplexes (Holliday junction).. Functionally, the RuvA-RuvB-RuvC complex processes Holliday junction (HJ) DNA during genetic recombination and DNA repair. Endonuclease that resolves HJ intermediates. Cleaves cruciform DNA by making single-stranded nicks across the HJ at symmetrical positions within the homologous arms, yielding a 5'-phosphate and a 3'-hydroxyl group; requires a central core of homology in the junction. The consensus cleavage sequence is 5'-(A/T)TT(C/G)-3'. Cleavage occurs on the 3'-side of the TT dinucleotide at the point of strand exchange. HJ branch migration catalyzed by RuvA-RuvB allows RuvC to scan DNA until it finds its consensus sequence, where it cleaves and resolves the cruciform DNA. This chain is Crossover junction endodeoxyribonuclease RuvC, found in Rubrobacter xylanophilus (strain DSM 9941 / JCM 11954 / NBRC 16129 / PRD-1).